Consider the following 318-residue polypeptide: Methionyl-tRNA formyltransferase (318 aa).

Residue 110-113 participates in (6S)-5,6,7,8-tetrahydrofolate binding; it reads SLLP.

The protein belongs to the Fmt family.

The enzyme catalyses L-methionyl-tRNA(fMet) + (6R)-10-formyltetrahydrofolate = N-formyl-L-methionyl-tRNA(fMet) + (6S)-5,6,7,8-tetrahydrofolate + H(+). Its function is as follows. Attaches a formyl group to the free amino group of methionyl-tRNA(fMet). The formyl group appears to play a dual role in the initiator identity of N-formylmethionyl-tRNA by promoting its recognition by IF2 and preventing the misappropriation of this tRNA by the elongation apparatus. This Ligilactobacillus salivarius (strain UCC118) (Lactobacillus salivarius) protein is Methionyl-tRNA formyltransferase.